Consider the following 111-residue polypeptide: Small ubiquitin-related modifier 3 (111 aa).

The 78-residue stretch at Ala16–Gly93 folds into the Ubiquitin-like domain. Gly93 is covalently cross-linked (Glycyl lysine isopeptide (Gly-Lys) (interchain with K-? in acceptor proteins)).

The protein belongs to the ubiquitin family. SUMO subfamily. In terms of assembly, interacts with SAE2, SCE1, SIZ1 and MMS21. Covalently attached to a number of proteins. Interacts with NPR1; this interaction promotes NPR1 phosphorylation and triggers its sumoylation and subsequent degradation.

The protein resides in the nucleus. It localises to the cytoplasm. In terms of biological role, ubiquitin-like protein which can be covalently attached to target lysines as a monomer. Does not seem to be involved in protein degradation and may function as an antagonist of ubiquitin in the degradation process. Promotes NPR1 sumoylation to activate defense gene expression and regulate its degradation. This Arabidopsis thaliana (Mouse-ear cress) protein is Small ubiquitin-related modifier 3.